The primary structure comprises 491 residues: Cytochrome P450 2F1 (491 aa).

C436 serves as a coordination point for heme.

Belongs to the cytochrome P450 family. Heme serves as cofactor. In terms of tissue distribution, expressed in lung. Rarely detected in liver and placenta.

The protein resides in the endoplasmic reticulum membrane. It localises to the microsome membrane. It carries out the reaction an organic molecule + reduced [NADPH--hemoprotein reductase] + O2 = an alcohol + oxidized [NADPH--hemoprotein reductase] + H2O + H(+). Functionally, may be involved in the metabolism of various pneumotoxicants including naphthalene. Is able to dealkylate ethoxycoumarin, propoxycoumarin, and pentoxyresorufin but possesses no activity toward ethoxyresorufin and only trace dearylation activity toward benzyloxyresorufin. Bioactivates 3-methylindole (3MI) by dehydrogenation to the putative electrophile 3-methylene-indolenine. This Homo sapiens (Human) protein is Cytochrome P450 2F1 (CYP2F1).